Consider the following 460-residue polypeptide: Serine--tRNA ligase (460 aa).

255-257 is a binding site for L-serine; the sequence is TAE. Residues 286 to 288 and Val302 contribute to the ATP site; that span reads RKE. Glu309 provides a ligand contact to L-serine. An ATP-binding site is contributed by 373-376; that stretch reads EMVS. Residue Thr409 participates in L-serine binding.

Belongs to the class-II aminoacyl-tRNA synthetase family. Type-1 seryl-tRNA synthetase subfamily. Homodimer. The tRNA molecule binds across the dimer.

It localises to the cytoplasm. It carries out the reaction tRNA(Ser) + L-serine + ATP = L-seryl-tRNA(Ser) + AMP + diphosphate + H(+). It catalyses the reaction tRNA(Sec) + L-serine + ATP = L-seryl-tRNA(Sec) + AMP + diphosphate + H(+). The protein operates within aminoacyl-tRNA biosynthesis; selenocysteinyl-tRNA(Sec) biosynthesis; L-seryl-tRNA(Sec) from L-serine and tRNA(Sec): step 1/1. In terms of biological role, catalyzes the attachment of serine to tRNA(Ser). Is also able to aminoacylate tRNA(Sec) with serine, to form the misacylated tRNA L-seryl-tRNA(Sec), which will be further converted into selenocysteinyl-tRNA(Sec). This chain is Serine--tRNA ligase, found in Aeropyrum pernix (strain ATCC 700893 / DSM 11879 / JCM 9820 / NBRC 100138 / K1).